The sequence spans 215 residues: Orotate phosphoribosyltransferase (215 aa).

Lys-26 serves as a coordination point for 5-phospho-alpha-D-ribose 1-diphosphate. Residue 34 to 35 (FF) participates in orotate binding. 5-phospho-alpha-D-ribose 1-diphosphate contacts are provided by residues 72-73 (YK), Arg-99, Lys-100, Lys-103, His-105, and 124-132 (DDVITAGTA). Positions 128 and 156 each coordinate orotate.

This sequence belongs to the purine/pyrimidine phosphoribosyltransferase family. PyrE subfamily. In terms of assembly, homodimer. Mg(2+) serves as cofactor.

The enzyme catalyses orotidine 5'-phosphate + diphosphate = orotate + 5-phospho-alpha-D-ribose 1-diphosphate. It participates in pyrimidine metabolism; UMP biosynthesis via de novo pathway; UMP from orotate: step 1/2. In terms of biological role, catalyzes the transfer of a ribosyl phosphate group from 5-phosphoribose 1-diphosphate to orotate, leading to the formation of orotidine monophosphate (OMP). The chain is Orotate phosphoribosyltransferase from Cellvibrio japonicus (strain Ueda107) (Pseudomonas fluorescens subsp. cellulosa).